A 691-amino-acid polypeptide reads, in one-letter code: Protein 4.2 (691 aa).

Glycine 2 carries the N-myristoyl glycine lipid modification. Positions leucine 31–phenylalanine 39 are band 3 binding. Serine 248 carries the post-translational modification Phosphoserine; by PKA.

This sequence belongs to the transglutaminase superfamily. Transglutaminase family. Component of the ankyrin-1 complex in the erythrocyte, composed of ANK1, RHCE, RHAG, SLC4A1, EPB42, GYPA, GYPB and AQP1. Interacts with SLC4A1 (via the cytoplasmic domain); this interaction is mediated by the SLC4A1 Band 3-I dimer. Interacts with ANK1 (via ANK 1-13 repeats). Interacts with AQP1 (via the C-terminal). Post-translationally, both cAMP-dependent kinase (CAPK) and another kinase present in the red-blood cells seem to be able to phosphorylate EPB42.

The protein localises to the cell membrane. It is found in the cytoplasm. The protein resides in the cytoskeleton. In terms of biological role, component of the ankyrin-1 complex, a multiprotein complex involved in the stability and shape of the erythrocyte membrane. The sequence is that of Protein 4.2 from Homo sapiens (Human).